A 288-amino-acid polypeptide reads, in one-letter code: Protease HtpX (288 aa).

The next 2 helical transmembrane spans lie at 5–25 and 35–55; these read IALF…VMSL and GLLV…LLLS. Residue H140 participates in Zn(2+) binding. The active site involves E141. H144 provides a ligand contact to Zn(2+). Helical transmembrane passes span 155–175 and 194–214; these read LLQG…GGII and IIVF…SMWF. E219 contacts Zn(2+).

This sequence belongs to the peptidase M48B family. The cofactor is Zn(2+).

It is found in the cell inner membrane. This is Protease HtpX from Stenotrophomonas maltophilia (strain K279a).